Consider the following 701-residue polypeptide: Polyribonucleotide nucleotidyltransferase (701 aa).

Positions 487 and 493 each coordinate Mg(2+). Residues proline 553–isoleucine 612 form the KH domain. The 71-residue stretch at glycine 622–lysine 692 folds into the S1 motif domain.

Belongs to the polyribonucleotide nucleotidyltransferase family. Mg(2+) is required as a cofactor.

The protein resides in the cytoplasm. The catalysed reaction is RNA(n+1) + phosphate = RNA(n) + a ribonucleoside 5'-diphosphate. Functionally, involved in mRNA degradation. Catalyzes the phosphorolysis of single-stranded polyribonucleotides processively in the 3'- to 5'-direction. This Laribacter hongkongensis (strain HLHK9) protein is Polyribonucleotide nucleotidyltransferase.